The sequence spans 140 residues: Cytochrome c-type biogenesis protein CcmE (140 aa).

The Cytoplasmic segment spans residues 1 to 7; it reads MKRKHKR. Residues 8 to 28 traverse the membrane as a helical; Signal-anchor for type II membrane protein segment; it reads LLFVLASFCAAGCALLFILSE. At 29–140 the chain is on the periplasmic side; sequence LRESVSFFYT…TAPKSSPEPK (112 aa). Positions 121 and 125 each coordinate heme.

The protein belongs to the CcmE/CycJ family.

It is found in the cell inner membrane. Functionally, heme chaperone required for the biogenesis of c-type cytochromes. Transiently binds heme delivered by CcmC and transfers the heme to apo-cytochromes in a process facilitated by CcmF and CcmH. The polypeptide is Cytochrome c-type biogenesis protein CcmE (Anaplasma marginale (strain St. Maries)).